The sequence spans 98 residues: MPEITRDQVEHLARLAHIRMTDEELDTMSGDLEKILEHVSAVQAAAGDDVTPTSHPIALENVFREDVPAGMLTQEEALDQAPDSEDGQFKVPAILDGE.

It belongs to the GatC family. In terms of assembly, heterotrimer of A, B and C subunits.

It catalyses the reaction L-glutamyl-tRNA(Gln) + L-glutamine + ATP + H2O = L-glutaminyl-tRNA(Gln) + L-glutamate + ADP + phosphate + H(+). The catalysed reaction is L-aspartyl-tRNA(Asn) + L-glutamine + ATP + H2O = L-asparaginyl-tRNA(Asn) + L-glutamate + ADP + phosphate + 2 H(+). Allows the formation of correctly charged Asn-tRNA(Asn) or Gln-tRNA(Gln) through the transamidation of misacylated Asp-tRNA(Asn) or Glu-tRNA(Gln) in organisms which lack either or both of asparaginyl-tRNA or glutaminyl-tRNA synthetases. The reaction takes place in the presence of glutamine and ATP through an activated phospho-Asp-tRNA(Asn) or phospho-Glu-tRNA(Gln). The polypeptide is Aspartyl/glutamyl-tRNA(Asn/Gln) amidotransferase subunit C (Micrococcus luteus (strain ATCC 4698 / DSM 20030 / JCM 1464 / CCM 169 / CCUG 5858 / IAM 1056 / NBRC 3333 / NCIMB 9278 / NCTC 2665 / VKM Ac-2230) (Micrococcus lysodeikticus)).